Here is a 307-residue protein sequence, read N- to C-terminus: tRNA dimethylallyltransferase (307 aa).

9–16 (GPTAIGKT) provides a ligand contact to ATP. A substrate-binding site is contributed by 11–16 (TAIGKT). Interaction with substrate tRNA regions lie at residues 34-37 (DSRQ) and 164-168 (QRMMR).

It belongs to the IPP transferase family. In terms of assembly, monomer. Mg(2+) serves as cofactor.

The enzyme catalyses adenosine(37) in tRNA + dimethylallyl diphosphate = N(6)-dimethylallyladenosine(37) in tRNA + diphosphate. In terms of biological role, catalyzes the transfer of a dimethylallyl group onto the adenine at position 37 in tRNAs that read codons beginning with uridine, leading to the formation of N6-(dimethylallyl)adenosine (i(6)A). The sequence is that of tRNA dimethylallyltransferase from Flavobacterium psychrophilum (strain ATCC 49511 / DSM 21280 / CIP 103535 / JIP02/86).